A 151-amino-acid polypeptide reads, in one-letter code: Large ribosomal subunit protein uL15 (151 aa).

Positions Met1 to Leu60 are disordered.

It belongs to the universal ribosomal protein uL15 family. In terms of assembly, part of the 50S ribosomal subunit.

In terms of biological role, binds to the 23S rRNA. In Streptomyces coelicolor (strain ATCC BAA-471 / A3(2) / M145), this protein is Large ribosomal subunit protein uL15.